A 265-amino-acid chain; its full sequence is Mlc titration factor A (265 aa).

Zn(2+) is bound by residues His-111, His-148, His-152, and Glu-211.

This sequence belongs to the MtfA family. In terms of assembly, interacts with Mlc. Zn(2+) serves as cofactor.

The protein localises to the cytoplasm. Functionally, involved in the modulation of the activity of the glucose-phosphotransferase system (glucose-PTS). Interacts with the transcriptional repressor Mlc, preventing its interaction with DNA and leading to the modulation of expression of genes regulated by Mlc, including ptsG, which encodes the PTS system glucose-specific EIICB component. In terms of biological role, shows zinc-dependent metallopeptidase activity. This Escherichia coli (strain SMS-3-5 / SECEC) protein is Mlc titration factor A.